A 421-amino-acid polypeptide reads, in one-letter code: D-amino acid dehydrogenase (421 aa).

3–17 (ILILGSGVVGTASAY) provides a ligand contact to FAD.

The protein belongs to the DadA oxidoreductase family. The cofactor is FAD.

It catalyses the reaction a D-alpha-amino acid + A + H2O = a 2-oxocarboxylate + AH2 + NH4(+). Its pathway is amino-acid degradation; D-alanine degradation; NH(3) and pyruvate from D-alanine: step 1/1. Functionally, oxidative deamination of D-amino acids. The chain is D-amino acid dehydrogenase from Xanthobacter autotrophicus (strain ATCC BAA-1158 / Py2).